The primary structure comprises 181 residues: Adenine phosphoribosyltransferase (181 aa).

Belongs to the purine/pyrimidine phosphoribosyltransferase family. In terms of assembly, homodimer.

Its subcellular location is the cytoplasm. It catalyses the reaction AMP + diphosphate = 5-phospho-alpha-D-ribose 1-diphosphate + adenine. It participates in purine metabolism; AMP biosynthesis via salvage pathway; AMP from adenine: step 1/1. Its function is as follows. Catalyzes a salvage reaction resulting in the formation of AMP, that is energically less costly than de novo synthesis. The polypeptide is Adenine phosphoribosyltransferase (Aliivibrio salmonicida (strain LFI1238) (Vibrio salmonicida (strain LFI1238))).